Consider the following 316-residue polypeptide: N-acetyl-gamma-glutamyl-phosphate reductase (316 aa).

Cys-136 is an active-site residue.

Belongs to the NAGSA dehydrogenase family. Type 1 subfamily.

It localises to the cytoplasm. The catalysed reaction is N-acetyl-L-glutamate 5-semialdehyde + phosphate + NADP(+) = N-acetyl-L-glutamyl 5-phosphate + NADPH + H(+). It participates in amino-acid biosynthesis; L-arginine biosynthesis; N(2)-acetyl-L-ornithine from L-glutamate: step 3/4. Functionally, catalyzes the NADPH-dependent reduction of N-acetyl-5-glutamyl phosphate to yield N-acetyl-L-glutamate 5-semialdehyde. The sequence is that of N-acetyl-gamma-glutamyl-phosphate reductase from Xanthomonas campestris pv. campestris (strain 8004).